A 123-amino-acid chain; its full sequence is Small ribosomal subunit protein uS12 (123 aa).

Asp-89 is subject to 3-methylthioaspartic acid.

The protein belongs to the universal ribosomal protein uS12 family. Part of the 30S ribosomal subunit. Contacts proteins S8 and S17. May interact with IF1 in the 30S initiation complex.

In terms of biological role, with S4 and S5 plays an important role in translational accuracy. Its function is as follows. Interacts with and stabilizes bases of the 16S rRNA that are involved in tRNA selection in the A site and with the mRNA backbone. Located at the interface of the 30S and 50S subunits, it traverses the body of the 30S subunit contacting proteins on the other side and probably holding the rRNA structure together. The combined cluster of proteins S8, S12 and S17 appears to hold together the shoulder and platform of the 30S subunit. The polypeptide is Small ribosomal subunit protein uS12 (Prochlorococcus marinus (strain MIT 9211)).